The following is an 85-amino-acid chain: Toxin AahP1005 (85 aa).

An N-terminal signal peptide occupies residues 1–19; it reads MNYLVMISLALLFMTGVES. The region spanning 21 to 83 is the LCN-type CS-alpha/beta domain; it reads KDGYIVDDKN…VSTKKKGGCN (63 aa). 4 disulfide bridges follow: cysteine 31/cysteine 82, cysteine 35/cysteine 55, cysteine 41/cysteine 65, and cysteine 45/cysteine 67. Asparagine 83 carries the asparagine amide modification.

It belongs to the long (4 C-C) scorpion toxin superfamily. Sodium channel inhibitor family. Alpha subfamily. Expressed by the venom gland.

It is found in the secreted. Its function is as follows. Alpha toxins bind voltage-independently at site-3 of sodium channels (Nav) and inhibit the inactivation of the activated channels, thereby blocking neuronal transmission. This Androctonus australis (Sahara scorpion) protein is Toxin AahP1005.